A 459-amino-acid polypeptide reads, in one-letter code: Argininosuccinate lyase (459 aa).

It belongs to the lyase 1 family. Argininosuccinate lyase subfamily.

The protein localises to the cytoplasm. The catalysed reaction is 2-(N(omega)-L-arginino)succinate = fumarate + L-arginine. The protein operates within amino-acid biosynthesis; L-arginine biosynthesis; L-arginine from L-ornithine and carbamoyl phosphate: step 3/3. The sequence is that of Argininosuccinate lyase from Lactococcus lactis subsp. cremoris (strain SK11).